We begin with the raw amino-acid sequence, 194 residues long: A-type ATP synthase subunit E (194 aa).

The protein belongs to the V-ATPase E subunit family. As to quaternary structure, has multiple subunits with at least A(3), B(3), C, D, E, F, H, I and proteolipid K(x).

The protein resides in the cell membrane. Its function is as follows. Component of the A-type ATP synthase that produces ATP from ADP in the presence of a proton gradient across the membrane. In Haloferax volcanii (strain ATCC 29605 / DSM 3757 / JCM 8879 / NBRC 14742 / NCIMB 2012 / VKM B-1768 / DS2) (Halobacterium volcanii), this protein is A-type ATP synthase subunit E.